A 101-amino-acid polypeptide reads, in one-letter code: Phosphoribosyl-AMP cyclohydrolase (101 aa).

Mg(2+) is bound at residue aspartate 71. Zn(2+) is bound at residue cysteine 72. Residues aspartate 73 and aspartate 75 each coordinate Mg(2+). Zn(2+) is bound by residues cysteine 88 and cysteine 95.

This sequence belongs to the PRA-CH family. Homodimer. Mg(2+) serves as cofactor. Requires Zn(2+) as cofactor.

The protein resides in the cytoplasm. It carries out the reaction 1-(5-phospho-beta-D-ribosyl)-5'-AMP + H2O = 1-(5-phospho-beta-D-ribosyl)-5-[(5-phospho-beta-D-ribosylamino)methylideneamino]imidazole-4-carboxamide. The protein operates within amino-acid biosynthesis; L-histidine biosynthesis; L-histidine from 5-phospho-alpha-D-ribose 1-diphosphate: step 3/9. Functionally, catalyzes the hydrolysis of the adenine ring of phosphoribosyl-AMP. The polypeptide is Phosphoribosyl-AMP cyclohydrolase (Bacillus cereus (strain Q1)).